The sequence spans 368 residues: Multifunctional CCA protein (368 aa).

ATP-binding residues include Gly8 and Arg11. 2 residues coordinate CTP: Gly8 and Arg11. Mg(2+) contacts are provided by Asp21 and Asp23. Residues Arg91, Arg137, and Arg140 each coordinate ATP. CTP is bound by residues Arg91, Arg137, and Arg140.

This sequence belongs to the tRNA nucleotidyltransferase/poly(A) polymerase family. Bacterial CCA-adding enzyme type 1 subfamily. In terms of assembly, monomer. Can also form homodimers and oligomers. Mg(2+) serves as cofactor. It depends on Ni(2+) as a cofactor.

The enzyme catalyses a tRNA precursor + 2 CTP + ATP = a tRNA with a 3' CCA end + 3 diphosphate. The catalysed reaction is a tRNA with a 3' CCA end + 2 CTP + ATP = a tRNA with a 3' CCACCA end + 3 diphosphate. Catalyzes the addition and repair of the essential 3'-terminal CCA sequence in tRNAs without using a nucleic acid template. Adds these three nucleotides in the order of C, C, and A to the tRNA nucleotide-73, using CTP and ATP as substrates and producing inorganic pyrophosphate. tRNA 3'-terminal CCA addition is required both for tRNA processing and repair. Also involved in tRNA surveillance by mediating tandem CCA addition to generate a CCACCA at the 3' terminus of unstable tRNAs. While stable tRNAs receive only 3'-terminal CCA, unstable tRNAs are marked with CCACCA and rapidly degraded. The protein is Multifunctional CCA protein of Pseudomonas putida (strain ATCC 47054 / DSM 6125 / CFBP 8728 / NCIMB 11950 / KT2440).